Reading from the N-terminus, the 395-residue chain is Probable eukaryotic translation initiation factor 5 (395 aa).

28–35 (GKGNGIKT) contributes to the GTP binding site. 2 disordered regions span residues 146–171 (PPAKKKSHKHKRDSPVAEEEDGAEDE) and 374–395 (LAEASDESESEDEEEEEEDDDE). Positions 147 to 157 (PAKKKSHKHKR) are enriched in basic residues. Composition is skewed to acidic residues over residues 161–170 (VAEEEDGAED) and 377–395 (ASDESESEDEEEEEEDDDE). The 157-residue stretch at 228-384 (EEAESSRYDQ…AEASDESESE (157 aa)) folds into the W2 domain.

Belongs to the eIF-2-beta/eIF-5 family. In terms of assembly, monomer.

Functionally, catalyzes the hydrolysis of GTP bound to the 40S ribosomal initiation complex (40S.mRNA.Met-tRNA[F].eIF-2.GTP) with the subsequent joining of a 60S ribosomal subunit resulting in the release of eIF-2 and the guanine nucleotide. The subsequent joining of a 60S ribosomal subunit results in the formation of a functional 80S initiation complex (80S.mRNA.Met-tRNA[F]). The protein is Probable eukaryotic translation initiation factor 5 (tif5) of Schizosaccharomyces pombe (strain 972 / ATCC 24843) (Fission yeast).